The primary structure comprises 792 residues: E3 UFM1-protein ligase 1 (792 aa).

At alanine 2 the chain carries N-acetylalanine. The segment at 2-200 (ADAWEEIRRL…RGLFSAITRP (199 aa)) is mediates interaction with DDRGK1. The tract at residues 2 to 212 (ADAWEEIRRL…VNSLISRYGF (211 aa)) is required for E3 UFM1-protein ligase activity. The segment at 121–250 (DRLAEEVNDK…KAVFIPDIYS (130 aa)) is involved in CDK5RAP3-binding. The mediates interaction with TRIP4 stretch occupies residues 200 to 400 (PTAVNSLISR…NPVHLITEED (201 aa)). Residues 412-471 (TSKKDKKDERRRKATEGSGSVRGGGGSNAREYKIKKTKKKGRKDDDSDDESSHTGKKKPE) are disordered. Arginine 433 is subject to Omega-N-methylarginine. Residues 453–471 (RKDDDSDDESSHTGKKKPE) show a composition bias toward basic and acidic residues. Serine 458 is subject to Phosphoserine. The tract at residues 488-682 (LQDAPEEFIS…QLKVTEDPAL (195 aa)) is mediates interaction with CDK5RAP3. Phosphothreonine is present on threonine 534. The residue at position 752 (serine 752) is a Phosphoserine.

This sequence belongs to the UFL1 family. In terms of assembly, catalytic component of the UFM1 ribosome E3 ligase (UREL) complex, composed of UFL1, DDRGK1 and CDK5RAP3. Interacts with E2-like enzyme UFC1. Interacts with RELA. Interacts with NBN; promoting recruitment to double-strand breaks following DNA damage. Interacts (when phosphorylated) with YWHAG/14-3-3-gamma; sequestering UFL1 and preventing its association with PDCD1/PD-1 substrate. Post-translationally, ubiquitinated, leading to its degradation by the proteasome. Interaction with CDK5RAP3 protects both proteins against ubiquitination and degradation via the proteasome. Phosphorylation at Thr-534 by AMPK promotes its interaction with YWHAG/14-3-3-gamma, thereby preventing UFL1 association with PDCD1/PD-1 substrate.

The protein localises to the endoplasmic reticulum membrane. It is found in the cytoplasm. Its subcellular location is the cytosol. It localises to the nucleus. The protein resides in the chromosome. E3 protein ligase that mediates ufmylation, the covalent attachment of the ubiquitin-like modifier UFM1 to lysine residues on target proteins, and which plays a key role in various processes, such as ribosome recycling, response to DNA damage, interferon response or reticulophagy (also called ER-phagy). Catalyzes ufmylation of many protein, such as CD274/PD-L1, CDK5RAP3, CYB5R3, DDRGK1, EIF6, histone H4, MRE11, P4HB, PDCD1/PD-1, TRIP4, RPN1, RPS20/uS10, RPL10/uL16, RPL26/uL24, SYVN1/HRD1 and TP53/p53. As part of the UREL complex, plays a key role in ribosome recycling by catalyzing mono-ufmylation of RPL26/uL24 subunit of the 60S ribosome. Ufmylation of RPL26/uL24 occurs on free 60S ribosomes following ribosome dissociation: it weakens the junction between post-termination 60S subunits and SEC61 translocons, promoting release and recycling of the large ribosomal subunit from the endoplasmic reticulum membrane. Ufmylation of RPL26/uL24 and subsequent 60S ribosome recycling either take place after normal termination of translation or after ribosome stalling during cotranslational translocation at the endoplasmic reticulum. Involved in reticulophagy in response to endoplasmic reticulum stress by mediating ufmylation of proteins such as CYB5R3 and RPN1, thereby promoting lysosomal degradation of ufmylated proteins. Ufmylation in response to endoplasmic reticulum stress is essential for processes such as hematopoiesis, blood vessel morphogenesis or inflammatory response. Regulates inflammation in response to endoplasmic reticulum stress by promoting reticulophagy, leading to inhibit the activity of the NF-kappa-B transcription factor. Mediates ufmylation of DDRGK1 and CDK5RAP3; the role of these modifications is however unclear: as both DDRGK1 and CDK5RAP3 act as substrate adapters for ufmylation, it is uncertain whether ufmylation of these proteins is, a collateral effect or is required for ufmylation. Acts as a negative regulator of T-cell activation by mediating ufmylation and stabilization of PDCD1/PD-1. Also involved in the response to DNA damage: recruited to double-strand break sites following DNA damage and mediates monoufmylation of histone H4 and ufmylation of MRE11. Mediates ufmylation of TP53/p53, promoting its stability. Catalyzes ufmylation of TRIP4, thereby playing a role in nuclear receptor-mediated transcription. Required for hematopoietic stem cell function and hematopoiesis. The polypeptide is E3 UFM1-protein ligase 1 (Bos taurus (Bovine)).